The chain runs to 211 residues: Thymidylate kinase (211 aa).

Position 11 to 18 (glycine 11 to threonine 18) interacts with ATP.

The protein belongs to the thymidylate kinase family.

The catalysed reaction is dTMP + ATP = dTDP + ADP. Functionally, phosphorylation of dTMP to form dTDP in both de novo and salvage pathways of dTTP synthesis. The polypeptide is Thymidylate kinase (Streptococcus agalactiae serotype Ia (strain ATCC 27591 / A909 / CDC SS700)).